The chain runs to 407 residues: Arginine biosynthesis bifunctional protein ArgJ (407 aa).

Residues T157, K183, T194, E280, N402, and T407 each coordinate substrate. T194 serves as the catalytic Nucleophile.

It belongs to the ArgJ family. In terms of assembly, heterotetramer of two alpha and two beta chains.

It localises to the cytoplasm. The enzyme catalyses N(2)-acetyl-L-ornithine + L-glutamate = N-acetyl-L-glutamate + L-ornithine. It catalyses the reaction L-glutamate + acetyl-CoA = N-acetyl-L-glutamate + CoA + H(+). Its pathway is amino-acid biosynthesis; L-arginine biosynthesis; L-ornithine and N-acetyl-L-glutamate from L-glutamate and N(2)-acetyl-L-ornithine (cyclic): step 1/1. The protein operates within amino-acid biosynthesis; L-arginine biosynthesis; N(2)-acetyl-L-ornithine from L-glutamate: step 1/4. Catalyzes two activities which are involved in the cyclic version of arginine biosynthesis: the synthesis of N-acetylglutamate from glutamate and acetyl-CoA as the acetyl donor, and of ornithine by transacetylation between N(2)-acetylornithine and glutamate. This Oceanobacillus iheyensis (strain DSM 14371 / CIP 107618 / JCM 11309 / KCTC 3954 / HTE831) protein is Arginine biosynthesis bifunctional protein ArgJ.